Here is a 204-residue protein sequence, read N- to C-terminus: Guanylate kinase (204 aa).

A Guanylate kinase-like domain is found at 5–184 (GLLLVLSGPS…AVNHIKAIVD (180 aa)). 12–19 (GPSGVGKG) is a binding site for ATP.

Belongs to the guanylate kinase family.

Its subcellular location is the cytoplasm. It carries out the reaction GMP + ATP = GDP + ADP. In terms of biological role, essential for recycling GMP and indirectly, cGMP. This Lactobacillus delbrueckii subsp. bulgaricus (strain ATCC 11842 / DSM 20081 / BCRC 10696 / JCM 1002 / NBRC 13953 / NCIMB 11778 / NCTC 12712 / WDCM 00102 / Lb 14) protein is Guanylate kinase.